The following is a 331-amino-acid chain: Aldo-keto reductase YhdN (331 aa).

Residues 20–21 (TW) and D52 each bind NADP(+). The active-site Proton donor is Y57. NADP(+)-binding positions include Q175, 203 to 208 (YGSLCR), K214, R227, 280 to 282 (GAR), and Q286.

Belongs to the aldo/keto reductase family. Aldo/keto reductase 11 subfamily. In terms of assembly, monomer.

Its function is as follows. Aldo-keto reductase (AKR) that displays broad substrate specificity in vitro. Is able to reduce the standard AKR substrates DL-glyceraldehyde, D-erythrose, methylglyoxal, p-nitrobenzaldehyde, benzaldehyde and butyraldehyde, in the presence of NADPH. Cannot use NADH as a cosubstrate. Does not act on glucose, 2-pyridine carboxyaldehyde, fructose and xylose. The physiological function of this enzyme is not clear. May play a role in bacterial stress response and/or in detoxification of reactive aldehydes. In Bacillus subtilis (strain 168), this protein is Aldo-keto reductase YhdN (yhdN).